The following is a 358-amino-acid chain: Plancitoxin-1 (358 aa).

A signal peptide spans M1–A26. N274 carries N-linked (GlcNAc...) asparagine glycosylation. The active site involves H303.

This sequence belongs to the DNase II family. In terms of assembly, plancitoxin is a heterodimer of alpha and beta subunits; disulfide-linked by a single disulfide bond. In terms of tissue distribution, venom gland.

Its subcellular location is the secreted. The catalysed reaction is Endonucleolytic cleavage to nucleoside 3'-phosphates and 3'-phosphooligonucleotide end-products.. Hydrolyzes DNA with an optimum pH of 7.2. Is potently hepatotoxic. It induces caspase-independent apoptosis (on rat liver cells) through the following procedure: binding to a specific receptor in the cytoplasmic membrane, entering the cell, entering the nucleus and degrading DNA. The chain is Plancitoxin-1 from Acanthaster planci (Crown-of-thorns starfish).